A 286-amino-acid chain; its full sequence is Aquaporin PIP2-4 (286 aa).

A run of 2 helical transmembrane segments spans residues 40–60 and 77–97; these read ALIAEFVATLLFLYVTVATVI and CGGVGVLGIAWAFGGMIFILV. An NPA 1 motif is present at residues 109 to 111; that stretch reads NPA. 3 helical membrane passes run 128–148, 170–190, and 204–224; these read LLYMAAQCLGAICGVALVKGF, GTGLAAEIIGTFVLVYTVFSA, and VLAPLPIGFAVFMVHLATIPI. Residues 230–232 carry the NPA 2 motif; sequence NPA. The chain crosses the membrane as a helical span at residues 252 to 272; the sequence is IFWVGPFIGAAIAALYHQVIL.

Belongs to the MIP/aquaporin (TC 1.A.8) family. PIP (TC 1.A.8.11) subfamily. Expressed in roots.

Its subcellular location is the cell membrane. Functionally, water channel required to facilitate the transport of water across cell membrane. May play a role in root water uptake. The chain is Aquaporin PIP2-4 (PIP2-4) from Oryza sativa subsp. japonica (Rice).